A 164-amino-acid chain; its full sequence is Pyruvoyl-dependent arginine decarboxylase (164 aa).

Residue serine 52 is modified to Pyruvic acid (Ser).

This sequence belongs to the PdaD family. Requires pyruvate as cofactor.

It catalyses the reaction L-arginine + H(+) = agmatine + CO2. The chain is Pyruvoyl-dependent arginine decarboxylase from Methanococcus maripaludis (strain C5 / ATCC BAA-1333).